The sequence spans 245 residues: Zinc finger protein AZF1 (245 aa).

Positions Met-1 to Ala-15 are enriched in polar residues. 2 disordered regions span residues Met-1–Leu-57 and Leu-112–Asn-141. Residues Tyr-97–His-119 form a C2H2-type 1 zinc finger. Positions Thr-123 to Leu-134 are enriched in polar residues. The C2H2-type 2 zinc finger occupies His-164–His-186. Residues Gly-193–Phe-231 are disordered.

In terms of tissue distribution, highly expressed in roots and at lower levels in leaves and stems.

The protein resides in the nucleus. Functionally, transcriptional repressor involved in the inhibition of plant growth under abiotic stress conditions. Can repress the expression of various genes, including osmotic stress and abscisic acid-repressive genes and auxin-inducible genes, by binding to their promoter regions in a DNA sequence-specific manner. This is Zinc finger protein AZF1 (AZF1) from Arabidopsis thaliana (Mouse-ear cress).